A 210-amino-acid chain; its full sequence is Endonuclease III (210 aa).

A HhH domain is found at 108–127; that stretch reads RIELESLPGVGRKTANIILN. [4Fe-4S] cluster contacts are provided by Cys-187, Cys-194, Cys-197, and Cys-203.

Belongs to the Nth/MutY family. It depends on [4Fe-4S] cluster as a cofactor.

The catalysed reaction is 2'-deoxyribonucleotide-(2'-deoxyribose 5'-phosphate)-2'-deoxyribonucleotide-DNA = a 3'-end 2'-deoxyribonucleotide-(2,3-dehydro-2,3-deoxyribose 5'-phosphate)-DNA + a 5'-end 5'-phospho-2'-deoxyribonucleoside-DNA + H(+). In terms of biological role, DNA repair enzyme that has both DNA N-glycosylase activity and AP-lyase activity. The DNA N-glycosylase activity releases various damaged pyrimidines from DNA by cleaving the N-glycosidic bond, leaving an AP (apurinic/apyrimidinic) site. The AP-lyase activity cleaves the phosphodiester bond 3' to the AP site by a beta-elimination, leaving a 3'-terminal unsaturated sugar and a product with a terminal 5'-phosphate. In Buchnera aphidicola subsp. Acyrthosiphon pisum (strain APS) (Acyrthosiphon pisum symbiotic bacterium), this protein is Endonuclease III.